A 1063-amino-acid chain; its full sequence is Retinoblastoma-like protein 1 (1063 aa).

Phosphothreonine is present on residues threonine 332, threonine 369, and threonine 385. The interval 383 to 584 (VTTPVASATQ…WEALHASANR (202 aa)) is domain A. The interval 383 to 944 (VTTPVASATQ…GRVKSFALKY (562 aa)) is pocket; binds T and E1A. A spacer region spans residues 585 to 779 (VPSCEEVIFP…AQDAHLTGVS (195 aa)). Phosphoserine is present on residues serine 640, serine 650, serine 748, and serine 761. Residues 780 to 944 (KPKRTGSLAL…GRVKSFALKY (165 aa)) are domain B. 3 positions are modified to phosphoserine: serine 959, serine 970, and serine 983. Threonine 992 carries the post-translational modification Phosphothreonine. Phosphoserine is present on residues serine 1004 and serine 1036.

The protein belongs to the retinoblastoma protein (RB) family. In terms of assembly, component of the DREAM complex (also named LINC complex) at least composed of E2F4, E2F5, LIN9, LIN37, LIN52, LIN54, MYBL1, MYBL2, RBL1, RBL2, RBBP4, TFDP1 and TFDP2. The complex exists in quiescent cells where it represses cell cycle-dependent genes. It dissociates in S phase when LIN9, LIN37, LIN52 and LIN54 form a subcomplex that binds to MYBL2. Interacts with AATF. Interacts with KDM5A. Interacts with KMT5B and KMT5C. Interacts with USP4. Interacts with RBBP9. In terms of processing, cell-cycle arrest properties are inactivated by phosphorylation on Thr-332, Ser-640, Ser-959 and Ser-970 by CDK4. Highly expressed in fetal heart and liver. Expressed at low levels in all other fetal tissues except skeletal muscle. High levels in neonatal spleen and thymus with low levels in other tissues. In adult, highly expressed in testis. Barely detectable in other tissues.

It localises to the nucleus. Its function is as follows. Key regulator of entry into cell division. Directly involved in heterochromatin formation by maintaining overall chromatin structure and, in particular, that of constitutive heterochromatin by stabilizing histone methylation. Recruits and targets histone methyltransferases KMT5B and KMT5C, leading to epigenetic transcriptional repression. Controls histone H4 'Lys-20' trimethylation. Probably acts as a transcription repressor by recruiting chromatin-modifying enzymes to promoters. Potent inhibitor of E2F-mediated trans-activation. May act as a tumor suppressor. The polypeptide is Retinoblastoma-like protein 1 (Rbl1) (Mus musculus (Mouse)).